Reading from the N-terminus, the 389-residue chain is 26S proteasome non-ATPase regulatory subunit 6 (389 aa).

The PCI domain occupies 193–361 (DFKQAAELFL…EIVETNRPDS (169 aa)).

This sequence belongs to the proteasome subunit S10 family. As to quaternary structure, component of the 19S proteasome regulatory particle complex. The 26S proteasome consists of a 20S core particle (CP) and two 19S regulatory subunits (RP). The regulatory particle is made of a lid composed of 9 subunits including PSMD6, a base containing 6 ATPases and few additional components.

In terms of biological role, component of the 26S proteasome, a multiprotein complex involved in the ATP-dependent degradation of ubiquitinated proteins. This complex plays a key role in the maintenance of protein homeostasis by removing misfolded or damaged proteins, which could impair cellular functions, and by removing proteins whose functions are no longer required. Therefore, the proteasome participates in numerous cellular processes, including cell cycle progression, apoptosis, or DNA damage repair. The polypeptide is 26S proteasome non-ATPase regulatory subunit 6 (Psmd6) (Mus musculus (Mouse)).